We begin with the raw amino-acid sequence, 546 residues long: CTP synthase (546 aa).

The amidoligase domain stretch occupies residues methionine 1–leucine 269. CTP is bound at residue serine 16. Serine 16 is a UTP binding site. ATP contacts are provided by residues serine 17 to valine 22 and aspartate 74. Residues aspartate 74 and glutamate 143 each contribute to the Mg(2+) site. CTP contacts are provided by residues aspartate 150–glutamate 152, lysine 190–glutamine 195, and lysine 226. UTP contacts are provided by residues lysine 190–glutamine 195 and lysine 226. The 253-residue stretch at isoleucine 294–asparagine 546 folds into the Glutamine amidotransferase type-1 domain. Position 356 (glycine 356) interacts with L-glutamine. The active-site Nucleophile; for glutamine hydrolysis is the cysteine 383. Residues leucine 384–glutamine 387, glutamate 407, and arginine 474 each bind L-glutamine. Active-site residues include histidine 519 and glutamate 521.

This sequence belongs to the CTP synthase family. In terms of assembly, homotetramer.

It carries out the reaction UTP + L-glutamine + ATP + H2O = CTP + L-glutamate + ADP + phosphate + 2 H(+). The enzyme catalyses L-glutamine + H2O = L-glutamate + NH4(+). It catalyses the reaction UTP + NH4(+) + ATP = CTP + ADP + phosphate + 2 H(+). It functions in the pathway pyrimidine metabolism; CTP biosynthesis via de novo pathway; CTP from UDP: step 2/2. Its activity is regulated as follows. Allosterically activated by GTP, when glutamine is the substrate; GTP has no effect on the reaction when ammonia is the substrate. The allosteric effector GTP functions by stabilizing the protein conformation that binds the tetrahedral intermediate(s) formed during glutamine hydrolysis. Inhibited by the product CTP, via allosteric rather than competitive inhibition. In terms of biological role, catalyzes the ATP-dependent amination of UTP to CTP with either L-glutamine or ammonia as the source of nitrogen. Regulates intracellular CTP levels through interactions with the four ribonucleotide triphosphates. In Francisella tularensis subsp. holarctica (strain FTNF002-00 / FTA), this protein is CTP synthase.